A 2627-amino-acid chain; its full sequence is Telomerase protein component 1 (2627 aa).

4 TEP1 N-terminal repeats span residues 1 to 30 (MEKL…DLQP), 31 to 60 (LEKL…DLKT), 61 to 90 (MEKP…DLKT), and 91 to 120 (MEKP…SLKS). 2 disordered regions span residues 193-214 (FDSE…SLGE) and 383-402 (RKHR…GMEP). The TROVE domain maps to 223 to 676 (VKLTSGDSES…VKHSLPLLPG (454 aa)). Residues 383-395 (RKHRAKRHPRRPP) are compositionally biased toward basic residues. The 329-residue stretch at 1162-1490 (RLSLVTGQSG…PLERPGARLC (329 aa)) folds into the NACHT domain. An ATP-binding site is contributed by 1168–1175 (GQSGQGKT). WD repeat units lie at residues 1411–1448 (VLPQ…TKSW), 1674–1713 (AVSS…EEKS), 1716–1754 (SGCD…RVLQ), 1757–1796 (AHQY…LAFQ), 1798–1837 (TYPK…VTKD), 1840–1879 (APGA…RLAA), 1882–1921 (AHHG…PRGH), 1925–1964 (LSLS…QGAQ), 1967–2005 (ALDV…LQSL), 2008–2047 (LSRF…RPHK), 2059–2098 (GHEG…TPVL), 2105–2143 (CHRD…RLGQ), 2146–2183 (GHQS…LTSI), 2185–2233 (AHSG…QTHT), 2236–2275 (GHSG…DDTC), 2278–2317 (RSSA…ATAQ), 2319–2355 (PGHI…GSAP), 2368–2417 (EDLG…PMIL), and 2459–2500 (NPSR…GEWT). Positions 2506 to 2522 (QKKANTPETQTPGTDPS) are enriched in polar residues. A disordered region spans residues 2506-2551 (QKKANTPETQTPGTDPSTCRESDASMDSDASMDSEPTPHLKTRQRR). WD repeat units lie at residues 2553 to 2590 (IHSG…LLGL) and 2592 to 2626 (RCEG…FLNW).

As to quaternary structure, associated component of the telomerase holoenzyme complex. Component of the vault ribonucleoprotein particle, at least composed of MVP, PARP4 and one or more vault RNAs (vRNAs). Binds to VAULTRC1, VAULTRC2 and VAULTRC4/hvg4 vRNAs. In terms of tissue distribution, ubiquitous.

It localises to the nucleus. It is found in the chromosome. Its subcellular location is the telomere. Functionally, component of the telomerase ribonucleoprotein complex that is essential for the replication of chromosome termini. Also a component of the ribonucleoprotein vaults particle, a multi-subunit structure involved in nucleo-cytoplasmic transport. Responsible for the localizing and stabilizing vault RNA (vRNA) association in the vault ribonucleoprotein particle. Binds to TERC. The protein is Telomerase protein component 1 (TEP1) of Homo sapiens (Human).